A 269-amino-acid chain; its full sequence is Shikimate dehydrogenase (NADP(+)) (269 aa).

Shikimate contacts are provided by residues 22–24 (TLS) and Thr68. The active-site Proton acceptor is the Lys72. Positions 93 and 104 each coordinate shikimate. NADP(+) is bound by residues 128–132 (GAGGA), 152–157 (NRTNLR), and Phe210. Tyr212 contributes to the shikimate binding site. Residue Gly233 coordinates NADP(+).

This sequence belongs to the shikimate dehydrogenase family. Homodimer.

The enzyme catalyses shikimate + NADP(+) = 3-dehydroshikimate + NADPH + H(+). The protein operates within metabolic intermediate biosynthesis; chorismate biosynthesis; chorismate from D-erythrose 4-phosphate and phosphoenolpyruvate: step 4/7. Functionally, involved in the biosynthesis of the chorismate, which leads to the biosynthesis of aromatic amino acids. Catalyzes the reversible NADPH linked reduction of 3-dehydroshikimate (DHSA) to yield shikimate (SA). The sequence is that of Shikimate dehydrogenase (NADP(+)) from Saccharolobus islandicus (strain L.S.2.15 / Lassen #1) (Sulfolobus islandicus).